A 662-amino-acid polypeptide reads, in one-letter code: MQLDDDLEFAKKIFNPNRAFAKQARIKNMCEYKDLVHEANENYENFWGELAKQKLTWFKPFDKVLNSDNAPFFKWFENGKINVSYNCIDRHLKDKKNKVAIIFEGEMGDYNAITYRKLHSEVNKTANLLKNEFNIKKGDRVIIYMPMIAESVYMMLACTRIGAIHSIVFAGFSPEALRDRINDAQAKLVITADGTFRKGKPYMLKPALDKALANNTCPSVEKTLIVIRNAKEIDYVRGRDFVYNEMVNYQSDKCEPEMMDSEDPLFLLYTSGSTGKPKGVQHSSAGYLLWAQMTMEWVFDIRDNDNFWCTADIGWITGHTYVVYGPLACGATTLILEGTMSYPDYGRWWRMIEEYRVDKFYTSPTAIRMLHAKGENEPSKYNLDSLKVLGTVGEPINPTAWKWFYEKIGNSQCSIVDTWWQTETGGHIISPLPGATPIRASCATLPLPGIHAEVLNEDGSKTKPGEQGFLCITKPWPSMIRNIWGDEKRYIDSYFSQIQLNGEYVYLSGDGAIVDENGYITIIGRTDDIVNVSGHRIGTAEVESAISKHEMVVECAVVGIPDTIKGEGLFAFVVLCDGAKCNLGESLELLKEMNHILAVEIGKIAKLDNVMYVPGLPKTRSGKIMRRILKSIVKKEPITQDLSTLEDVNVVKEIINIAQMEE.

Residues 197–200 and threonine 317 each bind CoA; that span reads RKGK. ATP is bound by residues 393–395, 417–422, aspartate 510, and arginine 525; these read GEP and DTWWQT. Serine 533 is a binding site for CoA. Arginine 536 contributes to the ATP binding site. 2 residues coordinate Mg(2+): histidine 549 and valine 552. N6-acetyllysine is present on lysine 623.

This sequence belongs to the ATP-dependent AMP-binding enzyme family. The cofactor is Mg(2+). Post-translationally, acetylated. Deacetylation by the SIR2-homolog deacetylase activates the enzyme.

It catalyses the reaction acetate + ATP + CoA = acetyl-CoA + AMP + diphosphate. Functionally, catalyzes the conversion of acetate into acetyl-CoA (AcCoA), an essential intermediate at the junction of anabolic and catabolic pathways. AcsA undergoes a two-step reaction. In the first half reaction, AcsA combines acetate with ATP to form acetyl-adenylate (AcAMP) intermediate. In the second half reaction, it can then transfer the acetyl group from AcAMP to the sulfhydryl group of CoA, forming the product AcCoA. This is Acetyl-coenzyme A synthetase from Helicobacter acinonychis (strain Sheeba).